Consider the following 69-residue polypeptide: Mu-conotoxin-like Am3.1 (69 aa).

The N-terminal stretch at 1–20 is a signal peptide; it reads MMSKLRVLLIICLLLFPLTA. A propeptide spanning residues 21 to 52 is cleaved from the precursor; that stretch reads VPLDGDQPADRPAERTQDDISSEHHPMFDAVR. Residues 22 to 43 form a disordered region; that stretch reads PLDGDQPADRPAERTQDDISSE. The segment covering 28–43 has biased composition (basic and acidic residues); that stretch reads PADRPAERTQDDISSE. The residue at position 66 (Pro66) is a 4-hydroxyproline; partial; in minor form. At Cys68 the chain carries Cysteine amide.

The protein belongs to the conotoxin M family. Post-translationally, mostly non-hydroxylated. Contains 3 disulfide bonds. Expressed by the venom duct.

The protein localises to the secreted. Its function is as follows. Mu-conotoxins block voltage-gated sodium channels (Nav). This Conus amadis (Amadis cone) protein is Mu-conotoxin-like Am3.1.